Reading from the N-terminus, the 237-residue chain is Large ribosomal subunit protein uL1 (237 aa).

The protein belongs to the universal ribosomal protein uL1 family. In terms of assembly, part of the 50S ribosomal subunit.

Binds directly to 23S rRNA. The L1 stalk is quite mobile in the ribosome, and is involved in E site tRNA release. In terms of biological role, protein L1 is also a translational repressor protein, it controls the translation of the L11 operon by binding to its mRNA. This chain is Large ribosomal subunit protein uL1, found in Thermosynechococcus vestitus (strain NIES-2133 / IAM M-273 / BP-1).